The chain runs to 289 residues: Probable endonuclease 4 (289 aa).

Zn(2+)-binding residues include His-74, His-115, Glu-150, Asp-184, His-187, His-218, Asp-231, His-233, and Glu-263.

Belongs to the AP endonuclease 2 family. The cofactor is Zn(2+).

It carries out the reaction Endonucleolytic cleavage to 5'-phosphooligonucleotide end-products.. Functionally, endonuclease IV plays a role in DNA repair. It cleaves phosphodiester bonds at apurinic or apyrimidinic (AP) sites, generating a 3'-hydroxyl group and a 5'-terminal sugar phosphate. The chain is Probable endonuclease 4 from Mycoplasma capricolum subsp. capricolum (strain California kid / ATCC 27343 / NCTC 10154).